We begin with the raw amino-acid sequence, 1715 residues long: Protein PHYLLO, chloroplastic (1715 aa).

A chloroplast-targeting transit peptide spans 1-19 (MRSSFLVSNPPFLPSLIPR). The inactive isochorismate synthase stretch occupies residues 20–273 (YSSRKSIRRS…EKSIFQVSSH (254 aa)). The tract at residues 363 to 933 (NAVWASAIIE…GTKSELEDAL (571 aa)) is 2-succinyl-5-enolpyruvyl-6-hydroxy-3-cyclohexene-1-carboxylate synthase. The helical transmembrane segment at 429 to 449 (AVIITSSGTAVSNLLPAVVEA) threads the bilayer. Residues 981–1364 (FLHPMIKNVL…SEDVMMNTLG (384 aa)) are O-succinylbenzoate synthase. The Proton donor; for the o-succinylbenzoate synthase activity role is filled by lysine 1170. Mg(2+) contacts are provided by aspartate 1202, glutamate 1228, and aspartate 1251. Lysine 1279 serves as the catalytic Proton acceptor; for the o-succinylbenzoate synthase activity. The interval 1418-1715 (HFIRVHDVGE…QKLLLALKEM (298 aa)) is 2-succinyl-6-hydroxy-2,4-cyclohexadiene-1-carboxylate synthase. One can recognise an AB hydrolase-1 domain in the interval 1435 to 1540 (LFLHGFLGTG…EGAVVVSGSP (106 aa)).

In the N-terminal section; belongs to the isochorismate synthase family. The protein in the 2nd section; belongs to the TPP enzyme family. MenD subfamily. It in the 3rd section; belongs to the mandelate racemase/muconate lactonizing enzyme family. MenC type 1 subfamily. This sequence in the C-terminal section; belongs to the AB hydrolase superfamily. MenH family. Mg(2+) serves as cofactor. Mn(2+) is required as a cofactor. It depends on thiamine diphosphate as a cofactor.

The protein resides in the plastid. It is found in the chloroplast membrane. It carries out the reaction isochorismate + 2-oxoglutarate + H(+) = 5-enolpyruvoyl-6-hydroxy-2-succinyl-cyclohex-3-ene-1-carboxylate + CO2. The catalysed reaction is (1R,6R)-6-hydroxy-2-succinyl-cyclohexa-2,4-diene-1-carboxylate = 2-succinylbenzoate + H2O. The enzyme catalyses 5-enolpyruvoyl-6-hydroxy-2-succinyl-cyclohex-3-ene-1-carboxylate = (1R,6R)-6-hydroxy-2-succinyl-cyclohexa-2,4-diene-1-carboxylate + pyruvate. Functionally, multifunctional enzyme required for phylloquinone (vitamin K1) biosynthesis. The protein is Protein PHYLLO, chloroplastic (PHYLLO) of Arabidopsis thaliana (Mouse-ear cress).